A 585-amino-acid chain; its full sequence is Glutamine--tRNA ligase (585 aa).

The short motif at 51–61 (PEPNGYLHIGH) is the 'HIGH' region element. Residues 52-54 (EPN) and 58-64 (HIGHAKS) contribute to the ATP site. Residues Asp-84 and Tyr-238 each coordinate L-glutamine. Residues Thr-257 and 292 to 293 (RL) each bind ATP. The 'KMSKS' region motif lies at 299–303 (ITSKR).

It belongs to the class-I aminoacyl-tRNA synthetase family. In terms of assembly, monomer.

The protein localises to the cytoplasm. It carries out the reaction tRNA(Gln) + L-glutamine + ATP = L-glutaminyl-tRNA(Gln) + AMP + diphosphate. The chain is Glutamine--tRNA ligase from Cupriavidus taiwanensis (strain DSM 17343 / BCRC 17206 / CCUG 44338 / CIP 107171 / LMG 19424 / R1) (Ralstonia taiwanensis (strain LMG 19424)).